The primary structure comprises 142 residues: C-type lectin 13 (142 aa).

Residues 1–23 (MGRLVFVSFGGWDVFLSLSGTGA) form the signal peptide. Intrachain disulfides connect Cys25-Cys36, Cys53-Cys138, and Cys115-Cys130. The region spanning 32–139 (YEGHCYRVFQ…CSKTHNVVCK (108 aa)) is the C-type lectin domain.

It belongs to the snaclec family. As to quaternary structure, heteromultimer; disulfide-linked. As to expression, expressed by the venom gland.

Its subcellular location is the secreted. Interferes with one step of hemostasis (modulation of platelet aggregation, or coagulation cascade, for example). The sequence is that of C-type lectin 13 from Crotalus adamanteus (Eastern diamondback rattlesnake).